Here is a 194-residue protein sequence, read N- to C-terminus: CASP-like protein 4C1 (194 aa).

Topologically, residues 1–35 (MRSPHAFRNGESPTLRDHTHFHSTVTAQKLRRFNS) are cytoplasmic. A helical transmembrane segment spans residues 36–56 (LILLLRLASFSFSLASAVFML). Residues 57 to 74 (TNSRGSASPHWYDFDAFR) are Extracellular-facing. The chain crosses the membrane as a helical span at residues 75–95 (FVFVANAIVALYSVFEMGTCV). The Cytoplasmic segment spans residues 96–114 (WEFSRETTLWPEAFQVWFD). Residues 115–135 (FGHDQVFSYLLLSAGSAAAAL) traverse the membrane as a helical segment. Over 136-157 (ARTMRGGDTCTANKAFCLQSDV) the chain is Extracellular. Residues 158-178 (AIGLGFAAFLFLAFSSCFSGF) form a helical membrane-spanning segment. Topologically, residues 179–194 (RVACFLITGSRFHLYS) are cytoplasmic.

Belongs to the Casparian strip membrane proteins (CASP) family. As to quaternary structure, homodimer and heterodimers.

The protein localises to the cell membrane. This chain is CASP-like protein 4C1, found in Arabidopsis thaliana (Mouse-ear cress).